The sequence spans 585 residues: Nucleus accumbens-associated protein 2 (585 aa).

The region spanning cysteine 30 to alanine 94 is the BTB domain. Residues lysine 171 and lysine 215 each participate in a glycyl lysine isopeptide (Lys-Gly) (interchain with G-Cter in SUMO2) cross-link. Positions proline 238 to tyrosine 261 are enriched in polar residues. The disordered stretch occupies residues proline 238–aspartate 269. Residues lysine 296, lysine 426, and lysine 453 each participate in a glycyl lysine isopeptide (Lys-Gly) (interchain with G-Cter in SUMO2) cross-link. In terms of domain architecture, BEN spans glycine 348–arginine 445. The segment at alanine 541 to leucine 585 is disordered. The span at glycine 549–alanine 571 shows a compositional bias: polar residues.

Homooligomer; mediated by the BTB domain. Interacts with the NuRD complex. Interacts (via C-terminal part) with HDAC2. Interacts (via BTB domain) with MTA1, MTA2 and MTA3.

The protein localises to the nucleus. Functionally, functions as a transcriptional repressor through its association with the NuRD complex. Recruits the NuRD complex to the promoter of MDM2, leading to the repression of MDM2 transcription and subsequent stability of p53/TP53. This chain is Nucleus accumbens-associated protein 2 (Nacc2), found in Rattus norvegicus (Rat).